Consider the following 210-residue polypeptide: Transcription factor ALC (210 aa).

The disordered stretch occupies residues 1–49 (MGDSDVGDRLPPPSSSDELSSFLRQILSRTPTAQPSSPPKSTNVSSAET). Positions 27–48 (LSRTPTAQPSSPPKSTNVSSAE) are enriched in polar residues. Residues 93–142 (IDAQFHNLSEKKRRSKINEKMKALQKLIPNSNKTDKASMLDEAIEYLKQL) enclose the bHLH domain.

Homodimer. In terms of tissue distribution, expressed constitutively in roots, leaves, stems, and flowers. Confined to the valve margins of the silique.

It localises to the nucleus. In terms of biological role, required for the dehiscence of fruit, especially for the separation of the valve cells from the replum. Promotes the differentiation of a strip of labile nonlignified cells sandwiched between layers of lignified cells. The sequence is that of Transcription factor ALC (ALC) from Arabidopsis thaliana (Mouse-ear cress).